The sequence spans 195 residues: Probable nicotinate-nucleotide adenylyltransferase (195 aa).

Belongs to the NadD family.

It carries out the reaction nicotinate beta-D-ribonucleotide + ATP + H(+) = deamido-NAD(+) + diphosphate. It functions in the pathway cofactor biosynthesis; NAD(+) biosynthesis; deamido-NAD(+) from nicotinate D-ribonucleotide: step 1/1. Catalyzes the reversible adenylation of nicotinate mononucleotide (NaMN) to nicotinic acid adenine dinucleotide (NaAD). The chain is Probable nicotinate-nucleotide adenylyltransferase from Chlorobaculum parvum (strain DSM 263 / NCIMB 8327) (Chlorobium vibrioforme subsp. thiosulfatophilum).